The primary structure comprises 264 residues: Proteasome subunit beta type-4 (264 aa).

Met1 bears the N-acetylmethionine mark. Positions 1–45 (MEAFLGSRSGLWAGGPAPGQFYRIPSTPDSFMDPASALYRGPITR) are excised as a propeptide. Ser26 bears the Phosphoserine mark. A Phosphotyrosine modification is found at Tyr102.

Belongs to the peptidase T1B family. The 26S proteasome consists of a 20S proteasome core and two 19S regulatory subunits. The 20S proteasome core is a barrel-shaped complex made of 28 subunits that are arranged in four stacked rings. The two outer rings are each formed by seven alpha subunits, and the two inner rings are formed by seven beta subunits. The proteolytic activity is exerted by three beta-subunits PSMB5, PSMB6 and PSMB7. Forms a ternary complex with SMAD1 and OAZ1 before PSMB4 is incorporated into the 20S proteasome. Interacts with PRPF19. In terms of assembly, (Microbial infection) Interacts with HTLV-1 Tax protein. As to quaternary structure, (Microbial infection) Interacts with HIV-1 Nef and Tat proteins.

The protein resides in the cytoplasm. It is found in the nucleus. Functionally, non-catalytic component of the 20S core proteasome complex involved in the proteolytic degradation of most intracellular proteins. This complex plays numerous essential roles within the cell by associating with different regulatory particles. Associated with two 19S regulatory particles, forms the 26S proteasome and thus participates in the ATP-dependent degradation of ubiquitinated proteins. The 26S proteasome plays a key role in the maintenance of protein homeostasis by removing misfolded or damaged proteins that could impair cellular functions, and by removing proteins whose functions are no longer required. Associated with the PA200 or PA28, the 20S proteasome mediates ubiquitin-independent protein degradation. This type of proteolysis is required in several pathways including spermatogenesis (20S-PA200 complex) or generation of a subset of MHC class I-presented antigenic peptides (20S-PA28 complex). SMAD1/OAZ1/PSMB4 complex mediates the degradation of the CREBBP/EP300 repressor SNIP1. The polypeptide is Proteasome subunit beta type-4 (Homo sapiens (Human)).